The sequence spans 294 residues: UDP-3-O-acyl-N-acetylglucosamine deacetylase (294 aa).

Residues His-75, His-232, and Asp-236 each contribute to the Zn(2+) site. His-259 (proton donor) is an active-site residue.

Belongs to the LpxC family. Zn(2+) serves as cofactor.

The enzyme catalyses a UDP-3-O-[(3R)-3-hydroxyacyl]-N-acetyl-alpha-D-glucosamine + H2O = a UDP-3-O-[(3R)-3-hydroxyacyl]-alpha-D-glucosamine + acetate. It functions in the pathway glycolipid biosynthesis; lipid IV(A) biosynthesis; lipid IV(A) from (3R)-3-hydroxytetradecanoyl-[acyl-carrier-protein] and UDP-N-acetyl-alpha-D-glucosamine: step 2/6. Catalyzes the hydrolysis of UDP-3-O-myristoyl-N-acetylglucosamine to form UDP-3-O-myristoylglucosamine and acetate, the committed step in lipid A biosynthesis. The protein is UDP-3-O-acyl-N-acetylglucosamine deacetylase of Campylobacter hominis (strain ATCC BAA-381 / DSM 21671 / CCUG 45161 / LMG 19568 / NCTC 13146 / CH001A).